The chain runs to 408 residues: MKLSASFAALALLLPFVQAQSPVWGQCGGIGWTGPTTCTAGNVCQEYSAYYSQCIPASQATSVTSVSTAPNPPPTSHTSTSSAPSGASTSTAKLNTLAKAKGKLYFGTATDNGELSDTAYTAILDDNTMFGQITPANSMKWDATEPQQGQFTFSGGDQIANLAKSNGMLLRGHNCVWYNQLPSWVSNGKFTAAQLTSIIQNHCSTLVTHYKGQVYAWDVVNEPFNDDGSWRTDVFYNTLGTSYVQIALEAARAADPDAKLYINEYNIEYAGAKATSLLNLVKTLKAASVPLDGIGFQSHFIVGQVPTGLQSQLTTFAAQGVEVAITELDIRMTLPSTPALLAQQKTDYSNVIKACASVEACVGVTVWDWTDKYSWVPNTFSGQGAACPWDQNFVRKPAYDGIAIGFGN.

The signal sequence occupies residues 1–19; sequence MKLSASFAALALLLPFVQA. The region spanning 20-55 is the CBM1 domain; sequence QSPVWGQCGGIGWTGPTTCTAGNVCQEYSAYYSQCI. Residues 64–89 form a disordered region; sequence TSVSTAPNPPPTSHTSTSSAPSGAST. The span at 76–89 shows a compositional bias: low complexity; that stretch reads SHTSTSSAPSGAST. The region spanning 88–405 is the GH10 domain; sequence STSTAKLNTL…KPAYDGIAIG (318 aa). Catalysis depends on Glu-222, which acts as the Proton donor. Residue Glu-327 is the Nucleophile of the active site. Cysteines 355 and 361 form a disulfide.

The protein belongs to the glycosyl hydrolase 10 (cellulase F) family.

The protein localises to the secreted. It carries out the reaction Endohydrolysis of (1-&gt;4)-beta-D-xylosidic linkages in xylans.. The protein operates within glycan degradation; xylan degradation. Its function is as follows. Endo-1,4-beta-xylanase involved in the hydrolysis of xylan, a major structural heterogeneous polysaccharide found in plant biomass representing the second most abundant polysaccharide in the biosphere, after cellulose. The polypeptide is Endo-1,4-beta-xylanase A (xynA) (Phanerodontia chrysosporium (White-rot fungus)).